A 130-amino-acid chain; its full sequence is Putative antitoxin VapB50 (130 aa).

Functionally, possibly the antitoxin component of a type II toxin-antitoxin (TA) system. Its cognate toxin is VapC50. This is Putative antitoxin VapB50 from Mycobacterium tuberculosis (strain ATCC 25618 / H37Rv).